Consider the following 799-residue polypeptide: Phenylalanine--tRNA ligase beta subunit (799 aa).

Residues 40 to 147 form the tRNA-binding domain; that stretch reads KSHLSSVITV…KDTTLGISVR (108 aa). Positions 402–479 constitute a B5 domain; the sequence is SKTVTIETNL…RTIGYASIRT (78 aa). Mg(2+) is bound by residues Asp457, Asp463, Glu466, and Glu467. The FDX-ACB domain maps to 707–799; it reads SHFPQGQLDL…TAKSNGYSLR (93 aa).

The protein belongs to the phenylalanyl-tRNA synthetase beta subunit family. Type 1 subfamily. As to quaternary structure, tetramer of two alpha and two beta subunits. Mg(2+) serves as cofactor.

It is found in the cytoplasm. It catalyses the reaction tRNA(Phe) + L-phenylalanine + ATP = L-phenylalanyl-tRNA(Phe) + AMP + diphosphate + H(+). The protein is Phenylalanine--tRNA ligase beta subunit of Leptospira biflexa serovar Patoc (strain Patoc 1 / Ames).